The sequence spans 344 residues: tRNA(Ile)-lysidine synthase (344 aa).

43-48 (SGGADS) is an ATP binding site.

This sequence belongs to the tRNA(Ile)-lysidine synthase family.

It localises to the cytoplasm. It catalyses the reaction cytidine(34) in tRNA(Ile2) + L-lysine + ATP = lysidine(34) in tRNA(Ile2) + AMP + diphosphate + H(+). Ligates lysine onto the cytidine present at position 34 of the AUA codon-specific tRNA(Ile) that contains the anticodon CAU, in an ATP-dependent manner. Cytidine is converted to lysidine, thus changing the amino acid specificity of the tRNA from methionine to isoleucine. In Bordetella parapertussis (strain 12822 / ATCC BAA-587 / NCTC 13253), this protein is tRNA(Ile)-lysidine synthase.